We begin with the raw amino-acid sequence, 912 residues long: DNA (cytosine-5)-methyltransferase 3A (912 aa).

2 disordered regions span residues 1–178 (MPAM…GWES) and 221–286 (IAGM…EYED). Positions 17–40 (AEREEDRKDGEEQEEPRGKEERQE) are enriched in basic and acidic residues. The segment covering 47-57 (KVGRPGRKRKH) has biased composition (basic residues). Residues 74 to 83 (KSPSMAQDSG) are compositionally biased toward polar residues. Ser105 bears the Phosphoserine mark. Residues 113-128 (GAPAEGEGAAETLPEA) show a composition bias toward low complexity. Residue Thr124 is modified to Phosphothreonine. The segment covering 149–167 (AGKEQKETNIESMKMEGSR) has biased composition (basic and acidic residues). A Glycyl lysine isopeptide (Lys-Gly) (interchain with G-Cter in SUMO2) cross-link involves residue Lys162. An Omega-N-methylarginine modification is found at Arg171. Residues 199–403 (SKRKRDEWLA…DTAKAVEVQN (205 aa)) form an interaction with DNMT1 and DNMT3B region. Residues Ser243 and Ser255 each carry the phosphoserine modification. Polar residues predominate over residues 246–260 (AVQQPTDPASPTVAT). At Thr261 the chain carries Phosphothreonine. Ser267 is modified (phosphoserine). Over residues 269 to 279 (AGDKNATKAGD) the composition is skewed to basic and acidic residues. The PWWP domain occupies 292–350 (IGELVWGKLRGFSWWPGRIVSWWMTGRSRAAEGTRWVMWFGDGKFSVVCVEKLMPLSSF). Residues Ser390 and Ser393 each carry the phosphoserine modification. The disordered stretch occupies residues 447–466 (AYAPPPPAKKPRKSTAEKPK). The region spanning 482-614 (EVRQKCRNIE…LQMFFANNHD (133 aa)) is the ADD domain. The segment at 493-523 (ICISCGSLNVTLEHPLFVGGMCQNCKNCFLE) adopts a GATA-type; atypical zinc-finger fold. An interaction with the PRC2/EED-EZH2 complex region spans residues 494–586 (CISCGSLNVT…KEDPWNCYMC (93 aa)). Residues 534 to 590 (QSYCTICCGGREVLMCGNNNCCRCFCVECVDLLVGPGAAQAAIKEDPWNCYMCGHKG) form a PHD-type; atypical zinc finger. Positions 634–912 (IRVLSLFDGI…APLKEYFACV (279 aa)) constitute an SAM-dependent MTase C5-type domain. S-adenosyl-L-methionine contacts are provided by residues 641–645 (DGIAT), Glu664, and 686–688 (DVR). Cys710 is a catalytic residue. Cys710 bears the S-methylcysteine; by autocatalysis mark. S-adenosyl-L-methionine is bound at residue 891 to 893 (RSW).

It belongs to the class I-like SAM-binding methyltransferase superfamily. C5-methyltransferase family. Heterotetramer composed of 1 DNMT3A homodimer and 2 DNMT3L subunits (DNMT3L-DNMT3A-DNMT3A-DNMT3L). Interacts with UBC9, PIAS1 and PIAS2. Binds the ZBTB18 transcriptional repressor. Interacts with SETDB1. Associates with HDAC1 through its ADD domain. Interacts with UHRF1. Interacts with DNMT1 and DNMT3B. Interacts with the PRC2/EED-EZH2 complex. Interacts with MPHOSPH8. Interacts with histone H3 that is not methylated at 'Lys-4' (H3K4). Interacts with SPOCD1. Interacts with ZNF263; recruited to the SIX3 promoter along with other proteins involved in chromatin modification and transcriptional corepression where it contributes to transcriptional repression. Post-translationally, sumoylated; sumoylation disrupts the ability to interact with histone deacetylases (HDAC1 and HDAC2) and repress transcription. Auto-methylated at Cys-710: auto-methylation takes place in absence of DNA substrate and inactivates the DNA methyltransferase activity. Inactivation by auto-methylation may be used to inactivate unused DNA methyltransferases in the cell. Highly expressed in fetal tissues, skeletal muscle, heart, peripheral blood mononuclear cells, kidney, and at lower levels in placenta, brain, liver, colon, spleen, small intestine and lung.

The protein resides in the nucleus. It localises to the chromosome. The protein localises to the cytoplasm. It carries out the reaction a 2'-deoxycytidine in DNA + S-adenosyl-L-methionine = a 5-methyl-2'-deoxycytidine in DNA + S-adenosyl-L-homocysteine + H(+). The catalysed reaction is L-cysteinyl-[protein] + S-adenosyl-L-methionine = S-methyl-L-cysteinyl-[protein] + S-adenosyl-L-homocysteine + H(+). Activated by binding to the regulatory factor DNMT3L. Auto-methylation at Cys-710 in absence of DNA inactivates the DNA methyltransferase activity. Required for genome-wide de novo methylation and is essential for the establishment of DNA methylation patterns during development. DNA methylation is coordinated with methylation of histones. It modifies DNA in a non-processive manner and also methylates non-CpG sites. May preferentially methylate DNA linker between 2 nucleosomal cores and is inhibited by histone H1. Plays a role in paternal and maternal imprinting. Required for methylation of most imprinted loci in germ cells. Acts as a transcriptional corepressor for ZBTB18. Recruited to trimethylated 'Lys-36' of histone H3 (H3K36me3) sites. Can actively repress transcription through the recruitment of HDAC activity. Also has weak auto-methylation activity on Cys-710 in absence of DNA. This Homo sapiens (Human) protein is DNA (cytosine-5)-methyltransferase 3A (DNMT3A).